Here is a 276-residue protein sequence, read N- to C-terminus: Diaminopimelate epimerase (276 aa).

Residues N13, Q46, and N66 each coordinate substrate. C75 (proton donor) is an active-site residue. Substrate is bound by residues 76–77, N159, N192, and 210–211; these read GN and ER. C219 serves as the catalytic Proton acceptor. Residue 220 to 221 coordinates substrate; sequence GT.

Belongs to the diaminopimelate epimerase family. Homodimer.

The protein localises to the cytoplasm. It catalyses the reaction (2S,6S)-2,6-diaminopimelate = meso-2,6-diaminopimelate. Its pathway is amino-acid biosynthesis; L-lysine biosynthesis via DAP pathway; DL-2,6-diaminopimelate from LL-2,6-diaminopimelate: step 1/1. Functionally, catalyzes the stereoinversion of LL-2,6-diaminopimelate (L,L-DAP) to meso-diaminopimelate (meso-DAP), a precursor of L-lysine and an essential component of the bacterial peptidoglycan. The protein is Diaminopimelate epimerase of Aeromonas hydrophila subsp. hydrophila (strain ATCC 7966 / DSM 30187 / BCRC 13018 / CCUG 14551 / JCM 1027 / KCTC 2358 / NCIMB 9240 / NCTC 8049).